Here is a 266-residue protein sequence, read N- to C-terminus: Chymotrypsin-like elastase family member 1 (266 aa).

Residues 1 to 16 form the signal peptide; sequence MLRFLVFASLVLCGHS. A propeptide spans 17–26 (activation peptide); that stretch reads TEDVPETDAR. A Peptidase S1 domain is found at 27-264; sequence VVGGAEARRN…YISWMNNVIA (238 aa). A disulfide bridge connects residues cysteine 56 and cysteine 72. The Charge relay system role is filled by histidine 71. Ca(2+) is bound by residues glutamate 85, asparagine 87, glutamine 90, and glutamate 95. Asparagine 87 carries an N-linked (GlcNAc...) asparagine glycan. Aspartate 119 serves as the catalytic Charge relay system. 3 cysteine pairs are disulfide-bonded: cysteine 153–cysteine 220, cysteine 184–cysteine 200, and cysteine 210–cysteine 240. Residue serine 214 is the Charge relay system of the active site.

This sequence belongs to the peptidase S1 family. Elastase subfamily. Ca(2+) serves as cofactor.

The protein localises to the secreted. The catalysed reaction is Hydrolysis of proteins, including elastin. Preferential cleavage: Ala-|-Xaa.. Its function is as follows. Serine proteases that hydrolyze many proteins in addition to elastin. In Mus musculus (Mouse), this protein is Chymotrypsin-like elastase family member 1 (Cela1).